We begin with the raw amino-acid sequence, 296 residues long: Tubulin polyglutamylase complex subunit 2 (296 aa).

The tract at residues 257 to 296 (KILIPKKKGPVQPVSGQKGPGPLAPPTSKPSAGCGNPVRK) is disordered.

In terms of assembly, part of the neuronal tubulin polyglutamylase complex which contains TPGS1, TPGS2, TTLL1, LRRC49 and NICN1. Interacts with CSTPP1 and LRRC49.

It is found in the cytoplasm. The protein localises to the cytoskeleton. Its subcellular location is the microtubule organizing center. It localises to the centrosome. The protein resides in the centriolar satellite. Functionally, subunit of the tubulin polyglutamylase complex (TPGC). The complex mediates cilia and flagella polyglutamylation which is essential for their biogenesis and motility. This Rattus norvegicus (Rat) protein is Tubulin polyglutamylase complex subunit 2 (Tpgs2).